A 270-amino-acid polypeptide reads, in one-letter code: Protein tonB2 (270 aa).

Residues 1-51 (MATPQPVDARTQPWRETPGGDLVALGRPVRQALHLVRHNPAQGRVLSRRET) are Cytoplasmic-facing. The chain crosses the membrane as a helical span at residues 52–69 (ILLVLFALTLHGAVIHWL). Topologically, residues 70-270 (SQQRTPALPE…VSVPIDFKLN (201 aa)) are periplasmic. Residues 80-187 (VPPQVPPMTI…LTPPSANAGY (108 aa)) are disordered. Over residues 94-118 (PAPPVVEPPPPEPLPPVVEEPPPPV) the composition is skewed to pro residues. Residues 133–143 (PKPKPKPKPQP) are compositionally biased toward basic residues. The segment covering 144–180 (RPKPAPKAVEPAPPAPPQPAAPPAPPAPAAAPAPLTP) has biased composition (pro residues). Residues 180 to 270 (PPSANAGYLH…VSVPIDFKLN (91 aa)) enclose the TonB C-terminal domain.

The protein belongs to the TonB family. Homodimer. Forms a complex with the accessory proteins ExbB and ExbD.

It localises to the cell inner membrane. In terms of biological role, interacts with outer membrane receptor proteins that carry out high-affinity binding and energy dependent uptake into the periplasmic space of specific substrates. It could act to transduce energy from the cytoplasmic membrane to specific energy-requiring processes in the outer membrane, resulting in the release into the periplasm of ligands bound by these outer membrane proteins. The sequence is that of Protein tonB2 (tonB2) from Pseudomonas aeruginosa (strain ATCC 15692 / DSM 22644 / CIP 104116 / JCM 14847 / LMG 12228 / 1C / PRS 101 / PAO1).